Here is a 434-residue protein sequence, read N- to C-terminus: Asparagine--tRNA ligase (434 aa).

The protein belongs to the class-II aminoacyl-tRNA synthetase family.

The protein localises to the cytoplasm. It catalyses the reaction tRNA(Asn) + L-asparagine + ATP = L-asparaginyl-tRNA(Asn) + AMP + diphosphate + H(+). The sequence is that of Asparagine--tRNA ligase from Pyrococcus horikoshii (strain ATCC 700860 / DSM 12428 / JCM 9974 / NBRC 100139 / OT-3).